The primary structure comprises 404 residues: Protein ORF23 (404 aa).

It belongs to the lymphocryptovirus BTRF1 family. In terms of assembly, interacts with ORF34.

Its subcellular location is the host nucleus. The protein resides in the host cytoplasm. In terms of biological role, plays a role in the expression of late genes. The sequence is that of Protein ORF23 (ORF23) from Homo sapiens (Human).